We begin with the raw amino-acid sequence, 456 residues long: UDP-glycosyltransferase 84B1 (456 aa).

Residues serine 278, 332-334 (SPQ), 349-357 (HCGWNSTME), and 371-374 (WTDQ) each bind UDP-alpha-D-glucose.

This sequence belongs to the UDP-glycosyltransferase family.

Possesses low quercetin 7-O-glucosyltransferase activity in vitro. This is UDP-glycosyltransferase 84B1 (UGT84B1) from Arabidopsis thaliana (Mouse-ear cress).